Reading from the N-terminus, the 508-residue chain is DNA-directed RNA polymerase subunit Rpo1C (508 aa).

Residues 1-123 are unknown; sequence MASLLWRDTS…EIKEKYGENL (123 aa). The segment at 124-508 is DNA-directed RNA polymerase subunit Rpo1C; the sequence is SEDVQKVLDD…IYKGYPKTKK (385 aa).

This sequence belongs to the RNA polymerase beta' chain family. In terms of assembly, part of the RNA polymerase complex.

The protein resides in the cytoplasm. It carries out the reaction RNA(n) + a ribonucleoside 5'-triphosphate = RNA(n+1) + diphosphate. Its function is as follows. DNA-dependent RNA polymerase (RNAP) catalyzes the transcription of DNA into RNA using the four ribonucleoside triphosphates as substrates. Forms part of the jaw domain. This chain is DNA-directed RNA polymerase subunit Rpo1C, found in Thermoplasma acidophilum (strain ATCC 25905 / DSM 1728 / JCM 9062 / NBRC 15155 / AMRC-C165).